A 93-amino-acid chain; its full sequence is Large ribosomal subunit protein uL23 (93 aa).

It belongs to the universal ribosomal protein uL23 family. In terms of assembly, part of the 50S ribosomal subunit. Contacts protein L29, and trigger factor when it is bound to the ribosome.

One of the early assembly proteins it binds 23S rRNA. One of the proteins that surrounds the polypeptide exit tunnel on the outside of the ribosome. Forms the main docking site for trigger factor binding to the ribosome. The protein is Large ribosomal subunit protein uL23 of Campylobacter lari (strain RM2100 / D67 / ATCC BAA-1060).